A 138-amino-acid polypeptide reads, in one-letter code: Enhancer of split malpha protein (138 aa).

It belongs to the M4-like protein family.

Functionally, part of the Notch signaling pathway. In Drosophila melanogaster (Fruit fly), this protein is Enhancer of split malpha protein.